We begin with the raw amino-acid sequence, 480 residues long: MSPQTETKASVGFKAGVKEYKLTYYTPEYEVKDTDILAAFRVTPQPGVPPEEAGAAVAAESSTGTWTTVWTDGLTSLDRYKGRCYDIEPVPGEEDQYICYVAYPLDLFEEGSVTNMFTSIVGNVFGFKALRALRLEDLRVPTAYIKTFQGPPHGIQVERDKLNKYGRPLLGCTIKPKLGLSAKNYGRAVYECLRGGLDFTKDDENVNSQPFMRWRDRFLFCAEAIFKSQAETGEIKGHYLNATAGTCEEMIKRAMCARELGVPIVMHDYLTGGFTANTSLAHYCRDNGLLLHIHRAMHAVIDRQKNHGMHFRVLAKALRMSGGDHIHAGTVVGKLEGERDITLGFVDLLRDDVIEKDRSRGIYFTQDWVSMPGVLPVASGGIHVWHMPALTEIFGDDSVLQFGGGTLGHPWGNAPGAVANRVALEACVQARNEGRDLAREGNEIIREASKWSPELAAACEVWKAIKFEFDAVDKLDKPAS.

Residues 1 to 2 (MS) constitute a propeptide that is removed on maturation. Position 3 is an N-acetylproline (Pro3). Lys14 carries the N6,N6,N6-trimethyllysine modification. Substrate contacts are provided by Asn123 and Thr173. The active-site Proton acceptor is the Lys175. Lys177 contacts substrate. 3 residues coordinate Mg(2+): Lys201, Asp203, and Glu204. At Lys201 the chain carries N6-carboxylysine. The active-site Proton acceptor is the His294. Substrate-binding residues include Arg295, His327, and Ser379.

This sequence belongs to the RuBisCO large chain family. Type I subfamily. Heterohexadecamer of 8 large chains and 8 small chains; disulfide-linked. The disulfide link is formed within the large subunit homodimers. Requires Mg(2+) as cofactor. The disulfide bond which can form in the large chain dimeric partners within the hexadecamer appears to be associated with oxidative stress and protein turnover.

The protein resides in the plastid. Its subcellular location is the chloroplast. It carries out the reaction 2 (2R)-3-phosphoglycerate + 2 H(+) = D-ribulose 1,5-bisphosphate + CO2 + H2O. It catalyses the reaction D-ribulose 1,5-bisphosphate + O2 = 2-phosphoglycolate + (2R)-3-phosphoglycerate + 2 H(+). Functionally, ruBisCO catalyzes two reactions: the carboxylation of D-ribulose 1,5-bisphosphate, the primary event in carbon dioxide fixation, as well as the oxidative fragmentation of the pentose substrate in the photorespiration process. Both reactions occur simultaneously and in competition at the same active site. The protein is Ribulose bisphosphate carboxylase large chain of Gossypium barbadense (Sea Island cotton).